A 157-amino-acid polypeptide reads, in one-letter code: Protein Smg homolog (157 aa).

Belongs to the Smg family.

This is Protein Smg homolog from Shewanella denitrificans (strain OS217 / ATCC BAA-1090 / DSM 15013).